Consider the following 362-residue polypeptide: UDP-N-acetylglucosamine--N-acetylmuramyl-(pentapeptide) pyrophosphoryl-undecaprenol N-acetylglucosamine transferase (362 aa).

UDP-N-acetyl-alpha-D-glucosamine is bound by residues 11-13 (TGG), Asn124, Arg163, Ser191, Ile246, and Gln291.

The protein belongs to the glycosyltransferase 28 family. MurG subfamily.

It localises to the cell inner membrane. The enzyme catalyses di-trans,octa-cis-undecaprenyl diphospho-N-acetyl-alpha-D-muramoyl-L-alanyl-D-glutamyl-meso-2,6-diaminopimeloyl-D-alanyl-D-alanine + UDP-N-acetyl-alpha-D-glucosamine = di-trans,octa-cis-undecaprenyl diphospho-[N-acetyl-alpha-D-glucosaminyl-(1-&gt;4)]-N-acetyl-alpha-D-muramoyl-L-alanyl-D-glutamyl-meso-2,6-diaminopimeloyl-D-alanyl-D-alanine + UDP + H(+). Its pathway is cell wall biogenesis; peptidoglycan biosynthesis. Functionally, cell wall formation. Catalyzes the transfer of a GlcNAc subunit on undecaprenyl-pyrophosphoryl-MurNAc-pentapeptide (lipid intermediate I) to form undecaprenyl-pyrophosphoryl-MurNAc-(pentapeptide)GlcNAc (lipid intermediate II). The chain is UDP-N-acetylglucosamine--N-acetylmuramyl-(pentapeptide) pyrophosphoryl-undecaprenol N-acetylglucosamine transferase from Idiomarina loihiensis (strain ATCC BAA-735 / DSM 15497 / L2-TR).